The following is a 254-amino-acid chain: Ribonuclease HII (254 aa).

The RNase H type-2 domain maps to K46–V234. A divalent metal cation is bound by residues D52, E53, and D144.

This sequence belongs to the RNase HII family. It depends on Mn(2+) as a cofactor. Mg(2+) serves as cofactor.

The protein localises to the cytoplasm. The enzyme catalyses Endonucleolytic cleavage to 5'-phosphomonoester.. In terms of biological role, endonuclease that specifically degrades the RNA of RNA-DNA hybrids. The sequence is that of Ribonuclease HII from Koribacter versatilis (strain Ellin345).